Consider the following 162-residue polypeptide: Endoribonuclease YbeY (162 aa).

His-126, His-130, and His-136 together coordinate Zn(2+).

This sequence belongs to the endoribonuclease YbeY family. Requires Zn(2+) as cofactor.

It localises to the cytoplasm. Single strand-specific metallo-endoribonuclease involved in late-stage 70S ribosome quality control and in maturation of the 3' terminus of the 16S rRNA. In Fusobacterium nucleatum subsp. nucleatum (strain ATCC 25586 / DSM 15643 / BCRC 10681 / CIP 101130 / JCM 8532 / KCTC 2640 / LMG 13131 / VPI 4355), this protein is Endoribonuclease YbeY.